The following is a 468-amino-acid chain: ATP synthase subunit beta (468 aa).

155 to 162 (GGAGVGKT) contributes to the ATP binding site.

Belongs to the ATPase alpha/beta chains family. F-type ATPases have 2 components, CF(1) - the catalytic core - and CF(0) - the membrane proton channel. CF(1) has five subunits: alpha(3), beta(3), gamma(1), delta(1), epsilon(1). CF(0) has three main subunits: a(1), b(2) and c(9-12). The alpha and beta chains form an alternating ring which encloses part of the gamma chain. CF(1) is attached to CF(0) by a central stalk formed by the gamma and epsilon chains, while a peripheral stalk is formed by the delta and b chains.

The protein localises to the cell inner membrane. It catalyses the reaction ATP + H2O + 4 H(+)(in) = ADP + phosphate + 5 H(+)(out). Produces ATP from ADP in the presence of a proton gradient across the membrane. The catalytic sites are hosted primarily by the beta subunits. This chain is ATP synthase subunit beta, found in Leptospira biflexa serovar Patoc (strain Patoc 1 / ATCC 23582 / Paris).